Here is a 122-residue protein sequence, read N- to C-terminus: UPF0102 protein CA_C1763 (122 aa).

The protein belongs to the UPF0102 family.

This is UPF0102 protein CA_C1763 from Clostridium acetobutylicum (strain ATCC 824 / DSM 792 / JCM 1419 / IAM 19013 / LMG 5710 / NBRC 13948 / NRRL B-527 / VKM B-1787 / 2291 / W).